The sequence spans 340 residues: Biotin synthase (340 aa).

Residues 56–283 form the Radical SAM core domain; that stretch reads NAVQLSTLLS…KAVVRLSAGR (228 aa). Residues cysteine 71, cysteine 75, and cysteine 78 each coordinate [4Fe-4S] cluster. Residues cysteine 115, cysteine 146, cysteine 206, and arginine 278 each contribute to the [2Fe-2S] cluster site.

The protein belongs to the radical SAM superfamily. Biotin synthase family. In terms of assembly, homodimer. It depends on [4Fe-4S] cluster as a cofactor. The cofactor is [2Fe-2S] cluster.

The catalysed reaction is (4R,5S)-dethiobiotin + (sulfur carrier)-SH + 2 reduced [2Fe-2S]-[ferredoxin] + 2 S-adenosyl-L-methionine = (sulfur carrier)-H + biotin + 2 5'-deoxyadenosine + 2 L-methionine + 2 oxidized [2Fe-2S]-[ferredoxin]. The protein operates within cofactor biosynthesis; biotin biosynthesis; biotin from 7,8-diaminononanoate: step 2/2. In terms of biological role, catalyzes the conversion of dethiobiotin (DTB) to biotin by the insertion of a sulfur atom into dethiobiotin via a radical-based mechanism. This Burkholderia lata (strain ATCC 17760 / DSM 23089 / LMG 22485 / NCIMB 9086 / R18194 / 383) protein is Biotin synthase.